A 119-amino-acid polypeptide reads, in one-letter code: NADH-quinone oxidoreductase subunit A (119 aa).

3 helical membrane passes run 7 to 27 (FPVLLFILVGIGVGLVPMFLG), 63 to 83 (LIAILFILFDLETAFLFPWGV), and 88 to 108 (IGWFGYASMVIFLLEFIVGFV).

Belongs to the complex I subunit 3 family. NDH-1 is composed of 14 different subunits. Subunits NuoA, H, J, K, L, M, N constitute the membrane sector of the complex.

Its subcellular location is the cell membrane. The enzyme catalyses a quinone + NADH + 5 H(+)(in) = a quinol + NAD(+) + 4 H(+)(out). Its function is as follows. NDH-1 shuttles electrons from NADH, via FMN and iron-sulfur (Fe-S) centers, to quinones in the respiratory chain. The immediate electron acceptor for the enzyme in this species is believed to be ubiquinone. Couples the redox reaction to proton translocation (for every two electrons transferred, four hydrogen ions are translocated across the cytoplasmic membrane), and thus conserves the redox energy in a proton gradient. The chain is NADH-quinone oxidoreductase subunit A from Polynucleobacter asymbioticus (strain DSM 18221 / CIP 109841 / QLW-P1DMWA-1) (Polynucleobacter necessarius subsp. asymbioticus).